Here is a 218-residue protein sequence, read N- to C-terminus: Large ribosomal subunit protein uL1 (218 aa).

The protein belongs to the universal ribosomal protein uL1 family. In terms of assembly, part of the 50S ribosomal subunit.

Its function is as follows. Probably involved in E site tRNA release. Binds directly to 23S rRNA. In terms of biological role, protein L1 is also a translational repressor protein, it controls the translation of its operon by binding to its mRNA. In Saccharolobus solfataricus (strain ATCC 35092 / DSM 1617 / JCM 11322 / P2) (Sulfolobus solfataricus), this protein is Large ribosomal subunit protein uL1.